Here is a 480-residue protein sequence, read N- to C-terminus: Proline--tRNA ligase (480 aa).

This sequence belongs to the class-II aminoacyl-tRNA synthetase family. ProS type 3 subfamily. In terms of assembly, homodimer.

It is found in the cytoplasm. It carries out the reaction tRNA(Pro) + L-proline + ATP = L-prolyl-tRNA(Pro) + AMP + diphosphate. Its function is as follows. Catalyzes the attachment of proline to tRNA(Pro) in a two-step reaction: proline is first activated by ATP to form Pro-AMP and then transferred to the acceptor end of tRNA(Pro). In Mycobacterium leprae (strain Br4923), this protein is Proline--tRNA ligase.